The primary structure comprises 314 residues: Acetyl-coenzyme A carboxylase carboxyl transferase subunit beta (314 aa).

The CoA carboxyltransferase N-terminal domain occupies 37 to 307 (LWQKCPACDA…MSLPALEPTY (271 aa)). Zn(2+) contacts are provided by Cys41, Cys44, Cys60, and Cys63. A C4-type zinc finger spans residues 41-63 (CPACDALTYTKDLQQNWQVCPSC).

This sequence belongs to the AccD/PCCB family. As to quaternary structure, acetyl-CoA carboxylase is a heterohexamer composed of biotin carboxyl carrier protein (AccB), biotin carboxylase (AccC) and two subunits each of ACCase subunit alpha (AccA) and ACCase subunit beta (AccD). Requires Zn(2+) as cofactor.

It localises to the cytoplasm. The catalysed reaction is N(6)-carboxybiotinyl-L-lysyl-[protein] + acetyl-CoA = N(6)-biotinyl-L-lysyl-[protein] + malonyl-CoA. It participates in lipid metabolism; malonyl-CoA biosynthesis; malonyl-CoA from acetyl-CoA: step 1/1. In terms of biological role, component of the acetyl coenzyme A carboxylase (ACC) complex. Biotin carboxylase (BC) catalyzes the carboxylation of biotin on its carrier protein (BCCP) and then the CO(2) group is transferred by the transcarboxylase to acetyl-CoA to form malonyl-CoA. This is Acetyl-coenzyme A carboxylase carboxyl transferase subunit beta from Synechococcus sp. (strain JA-3-3Ab) (Cyanobacteria bacterium Yellowstone A-Prime).